Here is an 81-residue protein sequence, read N- to C-terminus: Putative defensin-like protein 26 (81 aa).

A signal peptide spans Met1–Gly21. Disulfide bonds link Cys33–Cys81 and Cys52–Cys77.

This sequence belongs to the DEFL family.

The protein resides in the secreted. The protein is Putative defensin-like protein 26 of Arabidopsis thaliana (Mouse-ear cress).